The sequence spans 372 residues: 12-oxophytodienoate reductase 1 (372 aa).

Methionine 1 is modified (N-acetylmethionine). FMN is bound by residues 31 to 33 (PLT), alanine 64, and glutamine 106. A substrate-binding site is contributed by histidine 183. Residue tyrosine 188 is the Proton donor of the active site. Residue arginine 235 participates in FMN binding. Arginine 275 contacts substrate. Residues 303–305 (AGG) and 326–327 (GR) each bind FMN.

The protein belongs to the NADH:flavin oxidoreductase/NADH oxidase family. It depends on FMN as a cofactor. As to expression, mostly expressed in roots, also present in leaves, shoots and flowers. More abundant in cotyledons. In more details, expressed in peduncles, sepals, petals, around the abscission zone of siliques, maturing siliques and developing seeds.

Its subcellular location is the cytoplasm. It carries out the reaction (1S,2S)-OPC-8 + NADP(+) = (9S,13S,15Z)-12-oxophyto-10,15-dienoate + NADPH + H(+). It participates in lipid metabolism; oxylipin biosynthesis. Specifically cleaves olefinic bonds in alpha,beta-unsaturated carbonyls and may be involved in detoxification or modification of these reactive compounds. May be involved in the biosynthesis or metabolism of oxylipin signaling molecules. In vitro, reduces 9R,13R-12-oxophytodienoic acid (9R,13R-OPDA) to 9R,13R-OPC-8:0, but only poorly 9S,13S-OPDA, the natural precursor of jasmonic acid. Can detoxify the explosive 2,4,6-trinitrotoluene (TNT) in vitro and in vivo by catalyzing its nitroreduction to form hydroxylamino-dinitrotoluene (HADNT). This is 12-oxophytodienoate reductase 1 from Arabidopsis thaliana (Mouse-ear cress).